A 550-amino-acid chain; its full sequence is (S)-beta-bisabolene synthase (550 aa).

The Mg(2+) site is built by Asp303, Asp307, Ser451, and Glu455. The DDXXD motif motif lies at Asp303–Asp307.

It belongs to the terpene synthase family. Tpsa subfamily. It depends on Mg(2+) as a cofactor. The cofactor is Mn(2+). As to expression, expressed only in young rhizomes. Not detected in leaves, roots and mature rhizomes.

It carries out the reaction (2E,6E)-farnesyl diphosphate = (S)-beta-bisabolene + diphosphate. Sesquiterpene synthase involved in the biosynthesis of bisabolene. The sequence is that of (S)-beta-bisabolene synthase (TPS1) from Zingiber officinale (Ginger).